The primary structure comprises 334 residues: Holliday junction branch migration complex subunit RuvB (334 aa).

The large ATPase domain (RuvB-L) stretch occupies residues 4–184 (ADRLIQPQIQ…FGIPLRLEFY (181 aa)). ATP contacts are provided by residues arginine 24, glycine 65, lysine 68, threonine 69, threonine 70, 131–133 (EDY), arginine 174, tyrosine 184, and arginine 221. Position 69 (threonine 69) interacts with Mg(2+). Residues 185 to 255 (NIKDLSTIVT…VAEHALDLLD (71 aa)) form a small ATPAse domain (RuvB-S) region. A head domain (RuvB-H) region spans residues 258 to 334 (SEGFDYMDRK…YQHFELIKPE (77 aa)). Arginine 294, arginine 313, and arginine 318 together coordinate DNA.

The protein belongs to the RuvB family. Homohexamer. Forms an RuvA(8)-RuvB(12)-Holliday junction (HJ) complex. HJ DNA is sandwiched between 2 RuvA tetramers; dsDNA enters through RuvA and exits via RuvB. An RuvB hexamer assembles on each DNA strand where it exits the tetramer. Each RuvB hexamer is contacted by two RuvA subunits (via domain III) on 2 adjacent RuvB subunits; this complex drives branch migration. In the full resolvosome a probable DNA-RuvA(4)-RuvB(12)-RuvC(2) complex forms which resolves the HJ.

Its subcellular location is the cytoplasm. It catalyses the reaction ATP + H2O = ADP + phosphate + H(+). The RuvA-RuvB-RuvC complex processes Holliday junction (HJ) DNA during genetic recombination and DNA repair, while the RuvA-RuvB complex plays an important role in the rescue of blocked DNA replication forks via replication fork reversal (RFR). RuvA specifically binds to HJ cruciform DNA, conferring on it an open structure. The RuvB hexamer acts as an ATP-dependent pump, pulling dsDNA into and through the RuvAB complex. RuvB forms 2 homohexamers on either side of HJ DNA bound by 1 or 2 RuvA tetramers; 4 subunits per hexamer contact DNA at a time. Coordinated motions by a converter formed by DNA-disengaged RuvB subunits stimulates ATP hydrolysis and nucleotide exchange. Immobilization of the converter enables RuvB to convert the ATP-contained energy into a lever motion, pulling 2 nucleotides of DNA out of the RuvA tetramer per ATP hydrolyzed, thus driving DNA branch migration. The RuvB motors rotate together with the DNA substrate, which together with the progressing nucleotide cycle form the mechanistic basis for DNA recombination by continuous HJ branch migration. Branch migration allows RuvC to scan DNA until it finds its consensus sequence, where it cleaves and resolves cruciform DNA. The chain is Holliday junction branch migration complex subunit RuvB from Shewanella baltica (strain OS155 / ATCC BAA-1091).